The following is a 317-amino-acid chain: Heme A synthase (317 aa).

Over 1–6 (MQRSLK) the chain is Cytoplasmic. Residues 7 to 27 (WFASATTLAMLFVLIGGALVT) form a helical membrane-spanning segment. Topologically, residues 28 to 62 (KTGSGMGCGRSWPLCNGQWVPDHITPELIIELSHR) are extracellular. C35 and C42 are oxidised to a cystine. The active site involves E58. A heme o-binding site is contributed by H61. Residues 63–83 (LVSGLAGIMVLILSIWAWRAI) traverse the membrane as a helical segment. The Cytoplasmic portion of the chain corresponds to 84 to 90 (GHVQETK). The chain crosses the membrane as a helical span at residues 91–111 (FLAVISFVFLVLQGLIGAAAV). The Extracellular segment spans residues 112–121 (VWGQSDFVLA). The helical transmembrane segment at 122 to 142 (LHFGISLISFAAVLLLTLLIF) threads the bilayer. H123 lines the heme o pocket. Over 143–159 (EIDKTFSAASLSLDGKM) the chain is Cytoplasmic. Residues 160-180 (RFHIYGITIYSYIVVYTGALV) traverse the membrane as a helical segment. At 181 to 211 (RHTNASLACPSWPLCAKTRLLPVQFHEWVQM) the chain is on the extracellular side. Cysteines 189 and 195 form a disulfide. Residues 212 to 232 (GHRLAAAVIIIWIAAAAIHAV) form a helical membrane-spanning segment. H213 is a binding site for heme b. At 233 to 243 (RHYRRQPVIYY) the chain is on the cytoplasmic side. The helical transmembrane segment at 244-264 (GWLIALLLVLAQMTTGALVVF) threads the bilayer. Topologically, residues 265–270 (TQLNLY) are extracellular. The chain crosses the membrane as a helical span at residues 271–291 (IALAHAFFISCLFGVLSYLLL). Residue H275 coordinates heme b. At 292 to 317 (LALRTRRAPVKAADHSAGEAAPATLK) the chain is on the cytoplasmic side.

This sequence belongs to the COX15/CtaA family. Type 1 subfamily. Interacts with CtaB. It depends on heme b as a cofactor.

Its subcellular location is the cell membrane. The catalysed reaction is Fe(II)-heme o + 2 A + H2O = Fe(II)-heme a + 2 AH2. The protein operates within porphyrin-containing compound metabolism; heme A biosynthesis; heme A from heme O: step 1/1. Catalyzes the conversion of heme O to heme A by two successive hydroxylations of the methyl group at C8. The first hydroxylation forms heme I, the second hydroxylation results in an unstable dihydroxymethyl group, which spontaneously dehydrates, resulting in the formyl group of heme A. The polypeptide is Heme A synthase (Geobacillus kaustophilus (strain HTA426)).